The primary structure comprises 530 residues: Poly(U)-binding-splicing factor PUF60 (530 aa).

The tract at residues 1-487 is inhibits homodimerization; that stretch reads MATATIALGT…EDAEIIVKIF (487 aa). Lysine 14 participates in a covalent cross-link: Glycyl lysine isopeptide (Lys-Gly) (interchain with G-Cter in SUMO2). Threonine 31 bears the Phosphothreonine mark. The interval 48–530 is inhibits transcriptional repression, interaction with ERCC3 and apoptosis induction; the sequence is QSIKSVLVKQ…ERFDNSDLSA (483 aa). Residue lysine 51 forms a Glycyl lysine isopeptide (Lys-Gly) (interchain with G-Cter in SUMO2) linkage. Serine 83 carries the phosphoserine modification. 2 consecutive RRM domains span residues 100–178 and 197–275; these read CRVY…RPSN and NRIY…KAVT. Serine 215 is subject to Phosphoserine. Position 222 is an N6-acetyllysine (lysine 222). Threonine 285 carries the phosphothreonine modification. Residues 387–408 are disordered; sequence KKEKEEEELFPESERPEMLSEQ. Residue lysine 390 forms a Glycyl lysine isopeptide (Lys-Gly) (interchain with G-Cter in SUMO2) linkage. Residues 398–408 are compositionally biased toward basic and acidic residues; it reads ESERPEMLSEQ. Lysine 425 is subject to N6-acetyllysine. A Glycyl lysine isopeptide (Lys-Gly) (interchain with G-Cter in SUMO2) cross-link involves residue lysine 429. The RRM 3; atypical domain maps to 433–520; the sequence is TVMVLRNMVD…RKVVAEVYDQ (88 aa).

Belongs to the RRM half pint family. In terms of assembly, homodimer. Associates with the spliceosome. Found in a complex with RO60 and Y5 RNA. Found in a complex with FUBP1 and far upstream element (FUSE) DNA segment. Interacts directly with ERCC3. Interacts with CDK7 and GTF2H1. Interacts with SRSF11/P54. Interacts with ARGLU1; interaction may be involved in ARGLU1-mediated modulation of alternative splicing.

The protein resides in the nucleus. Its function is as follows. DNA- and RNA-binding protein, involved in several nuclear processes such as pre-mRNA splicing, apoptosis and transcription regulation. In association with FUBP1 regulates MYC transcription at the P2 promoter through the core-TFIIH basal transcription factor. Acts as a transcriptional repressor through the core-TFIIH basal transcription factor. Represses FUBP1-induced transcriptional activation but not basal transcription. Decreases ERCC3 helicase activity. Is also involved in pre-mRNA splicing. Promotes splicing of an intron with weak 3'-splice site and pyrimidine tract in a cooperative manner with U2AF2. Involved in apoptosis induction when overexpressed in HeLa cells. Modulates alternative splicing of several mRNAs. Binds to relaxed DNA of active promoter regions. Binds to the pyrimidine tract and 3'-splice site regions of pre-mRNA; binding is enhanced in presence of U2AF2. Binds to Y5 RNA in association with RO60. Binds to poly(U) RNA. The chain is Poly(U)-binding-splicing factor PUF60 from Bos taurus (Bovine).